Here is a 64-residue protein sequence, read N- to C-terminus: Large ribosomal subunit protein bL35 (64 aa).

Belongs to the bacterial ribosomal protein bL35 family.

The protein is Large ribosomal subunit protein bL35 of Micrococcus luteus (strain ATCC 4698 / DSM 20030 / JCM 1464 / CCM 169 / CCUG 5858 / IAM 1056 / NBRC 3333 / NCIMB 9278 / NCTC 2665 / VKM Ac-2230) (Micrococcus lysodeikticus).